The chain runs to 244 residues: Lipid A 1-phosphatase (244 aa).

6 helical membrane passes run 28–48 (LFVT…PIGA), 60–80 (ELLT…LLFF), 98–118 (ALYV…SGLL), 154–174 (FPSG…LLFP), 178–198 (VAFI…GAHY), and 201–221 (DVIA…IVFA).

Belongs to the lipid A LpxE 1-phosphatase family.

The protein resides in the cell inner membrane. It functions in the pathway bacterial outer membrane biogenesis; LPS lipid A biosynthesis. In terms of biological role, removes the 1-phosphate group from (tetraacyl) lipid A species, has no requirement for the Kdo(2) moiety of lipid A. Has no 4'-phosphatase activity. Reduces sensitivity of S.meliloti strain 1021 to the cationic antimicrobial peptide (CAMP) polymyxin B. In Rhizobium johnstonii (strain DSM 114642 / LMG 32736 / 3841) (Rhizobium leguminosarum bv. viciae), this protein is Lipid A 1-phosphatase.